The primary structure comprises 96 residues: MIKSELIARLANENPHLTQKDVERVVGVILERMIGALEDGGRVELRGFGALSVRSRPARTGRNPRTGEAVDVRAKHVPFFKSGKELRARLNADGDE.

Belongs to the bacterial histone-like protein family. In terms of assembly, heterodimer of an alpha and a beta chain.

In terms of biological role, this protein is one of the two subunits of integration host factor, a specific DNA-binding protein that functions in genetic recombination as well as in transcriptional and translational control. The sequence is that of Integration host factor subunit beta from Caulobacter vibrioides (strain ATCC 19089 / CIP 103742 / CB 15) (Caulobacter crescentus).